The sequence spans 652 residues: ATP-dependent zinc metalloprotease FtsH 2 (652 aa).

Over 1–6 the chain is Cytoplasmic; that stretch reads MNKYRR. The helical transmembrane segment at 7–27 threads the bilayer; the sequence is GLALGALALAVFILIGVGISM. Over 28–108 the chain is Extracellular; sequence RATPQPVNLT…PAGNGAISAD (81 aa). The chain crosses the membrane as a helical span at residues 109 to 129; that stretch reads LMLLLRILTIVAVGVVIFVLF. Residues 130–652 lie on the Cytoplasmic side of the membrane; the sequence is RRFGPSSIGT…RAAKPQIDRT (523 aa). Residue 200–207 participates in ATP binding; sequence GPPGTGKT. Histidine 420 is a Zn(2+) binding site. The active site involves glutamate 421. Residues histidine 424 and aspartate 496 each coordinate Zn(2+).

In the central section; belongs to the AAA ATPase family. It in the C-terminal section; belongs to the peptidase M41 family. In terms of assembly, homohexamer. Requires Zn(2+) as cofactor.

It localises to the cell membrane. In terms of biological role, acts as a processive, ATP-dependent zinc metallopeptidase for both cytoplasmic and membrane proteins. Plays a role in the quality control of integral membrane proteins. The chain is ATP-dependent zinc metalloprotease FtsH 2 from Sphaerobacter thermophilus (strain ATCC 49802 / DSM 20745 / KCCM 41009 / NCIMB 13125 / S 6022).